The sequence spans 86 residues: Serine protease inhibitor Kazal-type 4 (86 aa).

The signal sequence occupies residues 1–26; sequence MAVRLWVVALALAALFIVDREVPVSA. Residues 31 to 86 enclose the Kazal-like domain; the sequence is FSRMPICEHMTESPDCSRIYDPVCGTDGVTYESECKLCLARIENKQDIQIVKDGEC. 3 disulfides stabilise this stretch: Cys-37–Cys-68, Cys-46–Cys-65, and Cys-54–Cys-86.

In terms of tissue distribution, synthesized in duodenal goblet cells and in monocytes in bone marrow and blood.

It is found in the secreted. Inhibits the glucose-induced insulin secretion from perfused pancreas; also plays a role in the immune system. Does not inhibit trypsin. The chain is Serine protease inhibitor Kazal-type 4 (SPINK4) from Sus scrofa (Pig).